The following is a 379-amino-acid chain: MSVDVKSAQSSKSDSLQAEPRPGERDKALNLVLGQIERNFGKGSIMRLGDASRMRVETFPTGALTLDLALGGGYPKGRVVEVYGPESSGKTTLTLHAIAEVQRRGGVAAFVDAEHALDPVYAASLGVDIENLLVSQPDTGEMALEIVDQLVRSAAVDIVVVDSVAALTPRSEIEGEMGDLAVGSQARLMSQAMRKITGNIGKSGCTVIFLNQLRLKIGVTYGNPETTTGGNALKFYASVRLDIRRIQTLKRGTEEYGIRAKVKVAKNKVAPPFRIAEFDILFGRGISTLGCLLDLAEETGVVIRKGAWYSYEGDNIGQGRDNTITWLEQNSEAQEQIEVLVRQKLTEGSEVTANSMRPLAAAARTAAKKPAVSLASEAA.

Residues 1 to 24 (MSVDVKSAQSSKSDSLQAEPRPGE) form a disordered region. Residues 7-16 (SAQSSKSDSL) show a composition bias toward polar residues. 84 to 91 (GPESSGKT) contributes to the ATP binding site.

The protein belongs to the RecA family.

The protein localises to the cytoplasm. Its function is as follows. Can catalyze the hydrolysis of ATP in the presence of single-stranded DNA, the ATP-dependent uptake of single-stranded DNA by duplex DNA, and the ATP-dependent hybridization of homologous single-stranded DNAs. It interacts with LexA causing its activation and leading to its autocatalytic cleavage. This chain is Protein RecA, found in Prochlorococcus marinus (strain MIT 9303).